A 387-amino-acid polypeptide reads, in one-letter code: Patatin group A-3 (387 aa).

Positions 1–23 (MATTKSFLILIVMILATTSSTFA) are cleaved as a signal peptide. The PNPLA domain occupies 32–230 (LSIDGGGVKG…TVADPALLSV (199 aa)). The short motif at 36–41 (GGGVKG) is the GXGXXG element. Residues 75-79 (GTSTG) carry the GXSXG motif. Serine 77 serves as the catalytic Nucleophile. Asparagine 115 carries an N-linked (GlcNAc...) asparagine glycan. Aspartate 216 serves as the catalytic Proton acceptor. A DGA/G motif is present at residues 216–218 (DGA). A coiled-coil region spans residues 361–385 (ETYEEALKRFAKLLSDRKKLRANKA).

The protein belongs to the patatin family. In terms of tissue distribution, tuber and stolon.

It localises to the vacuole. Its function is as follows. Probable lipolytic acyl hydrolase (LAH), an activity which is thought to be involved in the response of tubers to pathogens. The chain is Patatin group A-3 from Solanum tuberosum (Potato).